A 117-amino-acid polypeptide reads, in one-letter code: Glutamine-rich protein (117 aa).

Residues 27–72 (RQQFQQQQQQQRQPQLQQQQQQQGIQQQPQGLQHQQQQFGLTQQHG) are compositionally biased toward low complexity. Residues 27 to 88 (RQQFQQQQQQ…IVQPNPASQN (62 aa)) are disordered. The span at 75-87 (RRQNIVQPNPASQ) shows a compositional bias: polar residues.

As to expression, component of the acid-soluble and acid-insoluble organic matrix of calcified shell layers (at protein level).

The protein resides in the secreted. This Haliotis asinina (Donkey's ear abalone) protein is Glutamine-rich protein.